Reading from the N-terminus, the 418-residue chain is MFSPDQENHPSKAPVKYGELIVLGYNGSLPNGDRGRRKSRFALFKRPKANGVKPSTVHIACTPQAAKAISNKDQHSISYTLSRAQTVVVEYTHDSNTDMFQIGRSTESPIDFVVTDTVPGSQSNSDTQSVQSTISRFACRIICERSPPFTARIYAAGFDSSKNIFLGEKAAKWKTSDGQMDGLTTNGVLVMHPRNGFTEDSKPGIWREISVCGNVFSLRETRSAQQRGKMVEIETNQLQDGSLIDLCGATLLWRTAEGLSHTPTVKHLEALRQEINAARPQCPVGFNTLAFPSMKRKDVVDEKQPWVYLNCGHVHGYHNWGNKEERDGKDRECPMCRSVGPYVPLWLGCEAGFYVDAGPPTHAFSPCGHVCSEKTTAYWSQIPLPHGTHTFHAACPFCAHQLAGEQGYIRLIFQGPLD.

One can recognise an FHA; atypical domain in the interval 13–200; the sequence is APVKYGELIV…MHPRNGFTED (188 aa). At serine 121 the chain carries Phosphoserine. Threonine 127 carries the phosphothreonine modification. Positions 311–399 are ring-like domain; necessary for ubiquitination of RIPK3; sequence CGHVHGYHNW…TFHAACPFCA (89 aa).

This sequence belongs to the pellino family. Interacts with MAP3K7. Upon IL1B treatment, forms a complex with TRAF6, IRAK1, IRAK4 and MYD88; this complex recruits MAP3K7/TAK1, TAB1 and TAB2 to mediate NF-kappa-B activation. Direct binding of SMAD6 to PELI1 prevents the complex formation and hence negatively regulates IL1R-TLR signaling and eventually NF-kappa-B-mediated gene expression. Interacts (via atypical FHA domain) with RIPK3. Binds preferentially to the 'Thr-182' phosphorylated form of RIPK3. Interacts with RIPK1. Post-translationally, phosphorylation by IRAK1 and IRAK4 enhances its E3 ligase activity. Phosphorylated by ATM in response to DNA damage, promoting localization to DNA double-strand breaks (DSBs) and ability to mediate 'Lys-63'-linked ubiquitination of NBN. Sumoylated.

It is found in the chromosome. The enzyme catalyses S-ubiquitinyl-[E2 ubiquitin-conjugating enzyme]-L-cysteine + [acceptor protein]-L-lysine = [E2 ubiquitin-conjugating enzyme]-L-cysteine + N(6)-ubiquitinyl-[acceptor protein]-L-lysine.. Its pathway is protein modification; protein ubiquitination. In terms of biological role, E3 ubiquitin ligase catalyzing the covalent attachment of ubiquitin moieties onto substrate proteins. Involved in the TLR and IL-1 signaling pathways via interaction with the complex containing IRAK kinases and TRAF6. Acts as a positive regulator of inflammatory response in microglia through activation of NF-kappa-B and MAP kinase. Mediates 'Lys-63'-linked polyubiquitination of IRAK1 allowing subsequent NF-kappa-B activation. Conjugates 'Lys-63'-linked ubiquitin chains to the adapter protein ASC/PYCARD, which in turn is crucial for NLRP3 inflammasome activation. Mediates 'Lys-48'-linked polyubiquitination of RIPK3 leading to its subsequent proteasome-dependent degradation; preferentially recognizes and mediates the degradation of the 'Thr-182' phosphorylated form of RIPK3. Negatively regulates necroptosis by reducing RIPK3 expression. Mediates 'Lys-63'-linked ubiquitination of RIPK1. Following phosphorylation by ATM, catalyzes 'Lys-63'-linked ubiquitination of NBN, promoting DNA repair via homologous recombination. Negatively regulates activation of the metabolic mTORC1 signaling pathway by mediating 'Lys-63'-linked ubiquitination of mTORC1-inhibitory protein TSC1 and thereby promoting TSC1/TSC2 complex stability. This Mus musculus (Mouse) protein is E3 ubiquitin-protein ligase pellino homolog 1 (Peli1).